A 935-amino-acid chain; its full sequence is MFGRLLLLGILFHVVFLKSIFDIYFVTPLIHGMKQYSAGEAPAKRLFLIVGDGLRPDKLLQPHSEKVIGEEQTYAAPFLRSIIQNNGTFGVSHTRVPTESRPGHVALIAGFYEDVSAVTKGWKKNPVNFDSVFNQSRHTYSFGSEDILPMFSEGASDPSRVDTFMYSSELEDFSSNGIVLDEWVFDRLDELLAQSLEDKELWDMLHRDKIVFFLHLLGIDTIGHNKHPDSVEYVENIQYIDGKIQELVDKMNNYYNNDGASSWVFTADHGMSDFGSHGDGNLDNTRTPIIAWGAGIQSPTHEKNYGHDEYSLPWNLTEIKRIDIQQADIAALMSYLVGLNFPVNSVGQIPLDYLDCSSRRKAEVALMNALEIGEQYNLKSASKDQTSIFFRPYSPLRNYTEVQASFYNSVIADIESGEYEIAIEHCFHFSQTVLSGLRYLQRYDWLLLRSIVFFGYLSWIGYVICFVFSLNIEPSSKIVKPVSVVKRVAFNIPFLLICIFFYIQSSPPFYYGYALFPTIFLQLIHSIFPNTKLGFKNFLTVAKQKHGFSLLKILFISLCILCLLQFIVYSYFHREGFSVILMGLAAWPWLLHADYAFSHKTISVSWSVLTSLLCFFTILPVNKKESLLFIFAGGFAMSVAGVFYILYRRNQAFQYSSTVTNKQLVLQVLIIMATVPVTLKIADSLQRNIAIPPILRLVAFGLFITSYIIPSHHIRSCKHYFLDRLAILFLTFSPTMCMLSISFEALFYVVLFITLGLWMELETELQKYTEQLHPEYSRKKDAKFHLSLSHIRISLFFYIFINVAFFGTGNVASLSTFALDSVKRFIPVFNPVTQGALLMYTILVPFIALSAAFGIMNKRLGGIQQVTFFLAVGMADIVTINFFYLVKDEGSWKDIGVSISHFCISNFLILFITALEHASAILCKNITYTIHEKVN.

The Cytoplasmic portion of the chain corresponds to 1-5 (MFGRL). A helical membrane pass occupies residues 6–26 (LLLGILFHVVFLKSIFDIYFV). The Lumenal segment spans residues 27-449 (TPLIHGMKQY…LQRYDWLLLR (423 aa)). Residues Asn86, Asn134, Asn315, and Asn398 are each glycosylated (N-linked (GlcNAc...) asparagine). Residues 450-470 (SIVFFGYLSWIGYVICFVFSL) traverse the membrane as a helical segment. Residues 471-483 (NIEPSSKIVKPVS) lie on the Cytoplasmic side of the membrane. Residues 484–503 (VVKRVAFNIPFLLICIFFYI) traverse the membrane as a helical segment. Residues 504–509 (QSSPPF) are Lumenal-facing. The helical transmembrane segment at 510 to 530 (YYGYALFPTIFLQLIHSIFPN) threads the bilayer. Residues 531–547 (TKLGFKNFLTVAKQKHG) are Cytoplasmic-facing. The chain crosses the membrane as a helical span at residues 548 to 568 (FSLLKILFISLCILCLLQFIV). The Lumenal portion of the chain corresponds to 569–576 (YSYFHREG). Residues 577–597 (FSVILMGLAAWPWLLHADYAF) traverse the membrane as a helical segment. At 598-600 (SHK) the chain is on the cytoplasmic side. The helical transmembrane segment at 601–621 (TISVSWSVLTSLLCFFTILPV) threads the bilayer. Over 622-626 (NKKES) the chain is Lumenal. A helical transmembrane segment spans residues 627–647 (LLFIFAGGFAMSVAGVFYILY). At 648–663 (RRNQAFQYSSTVTNKQ) the chain is on the cytoplasmic side. Residues 664-684 (LVLQVLIIMATVPVTLKIADS) traverse the membrane as a helical segment. Topologically, residues 685 to 688 (LQRN) are lumenal. Residues 689–709 (IAIPPILRLVAFGLFITSYII) traverse the membrane as a helical segment. Topologically, residues 710 to 737 (PSHHIRSCKHYFLDRLAILFLTFSPTMC) are cytoplasmic. The chain crosses the membrane as a helical span at residues 738–758 (MLSISFEALFYVVLFITLGLW). Over 759-792 (MELETELQKYTEQLHPEYSRKKDAKFHLSLSHIR) the chain is Lumenal. Residues 793-813 (ISLFFYIFINVAFFGTGNVAS) traverse the membrane as a helical segment. Residues 814-835 (LSTFALDSVKRFIPVFNPVTQG) are Cytoplasmic-facing. A helical transmembrane segment spans residues 836–856 (ALLMYTILVPFIALSAAFGIM). Residues 857–865 (NKRLGGIQQ) lie on the Lumenal side of the membrane. A helical membrane pass occupies residues 866–886 (VTFFLAVGMADIVTINFFYLV). Residues 887–894 (KDEGSWKD) are Cytoplasmic-facing. The helical transmembrane segment at 895 to 915 (IGVSISHFCISNFLILFITAL) threads the bilayer. Residues 916–935 (EHASAILCKNITYTIHEKVN) lie on the Lumenal side of the membrane. N-linked (GlcNAc...) asparagine glycosylation occurs at Asn925.

This sequence belongs to the PIGG/PIGN/PIGO family. PIGN subfamily.

Its subcellular location is the endoplasmic reticulum membrane. Its pathway is glycolipid biosynthesis; glycosylphosphatidylinositol-anchor biosynthesis. In terms of biological role, ethanolamine phosphate transferase involved in glycosylphosphatidylinositol-anchor biosynthesis. Transfers ethanolamine phosphate to the first alpha-1,4-linked mannose of the glycosylphosphatidylinositol precursor of GPI-anchor. This chain is GPI ethanolamine phosphate transferase 1 (its8), found in Schizosaccharomyces pombe (strain 972 / ATCC 24843) (Fission yeast).